A 325-amino-acid polypeptide reads, in one-letter code: Beta-ketoacyl-[acyl-carrier-protein] synthase III (325 aa).

Catalysis depends on residues cysteine 119 and histidine 252. The tract at residues 253 to 257 (QANIR) is ACP-binding. The active site involves asparagine 282.

Belongs to the thiolase-like superfamily. FabH family. As to quaternary structure, homodimer.

Its subcellular location is the cytoplasm. The catalysed reaction is malonyl-[ACP] + acetyl-CoA + H(+) = 3-oxobutanoyl-[ACP] + CO2 + CoA. It functions in the pathway lipid metabolism; fatty acid biosynthesis. Catalyzes the condensation reaction of fatty acid synthesis by the addition to an acyl acceptor of two carbons from malonyl-ACP. Catalyzes the first condensation reaction which initiates fatty acid synthesis and may therefore play a role in governing the total rate of fatty acid production. Possesses both acetoacetyl-ACP synthase and acetyl transacylase activities. Its substrate specificity determines the biosynthesis of branched-chain and/or straight-chain of fatty acids. The sequence is that of Beta-ketoacyl-[acyl-carrier-protein] synthase III from Verminephrobacter eiseniae (strain EF01-2).